Here is a 110-residue protein sequence, read N- to C-terminus: Large ribosomal subunit protein uL22 (110 aa).

Belongs to the universal ribosomal protein uL22 family. Part of the 50S ribosomal subunit.

In terms of biological role, this protein binds specifically to 23S rRNA; its binding is stimulated by other ribosomal proteins, e.g. L4, L17, and L20. It is important during the early stages of 50S assembly. It makes multiple contacts with different domains of the 23S rRNA in the assembled 50S subunit and ribosome. Its function is as follows. The globular domain of the protein is located near the polypeptide exit tunnel on the outside of the subunit, while an extended beta-hairpin is found that lines the wall of the exit tunnel in the center of the 70S ribosome. This is Large ribosomal subunit protein uL22 from Dichelobacter nodosus (strain VCS1703A).